Here is a 493-residue protein sequence, read N- to C-terminus: Probable cytosol aminopeptidase (493 aa).

Mn(2+) is bound by residues Lys256 and Asp261. Lys268 is a catalytic residue. 3 residues coordinate Mn(2+): Asp279, Asp338, and Glu340. Residue Arg342 is part of the active site.

It belongs to the peptidase M17 family. It depends on Mn(2+) as a cofactor.

The protein resides in the cytoplasm. It catalyses the reaction Release of an N-terminal amino acid, Xaa-|-Yaa-, in which Xaa is preferably Leu, but may be other amino acids including Pro although not Arg or Lys, and Yaa may be Pro. Amino acid amides and methyl esters are also readily hydrolyzed, but rates on arylamides are exceedingly low.. The catalysed reaction is Release of an N-terminal amino acid, preferentially leucine, but not glutamic or aspartic acids.. Presumably involved in the processing and regular turnover of intracellular proteins. Catalyzes the removal of unsubstituted N-terminal amino acids from various peptides. The protein is Probable cytosol aminopeptidase of Phytoplasma australiense.